The sequence spans 1780 residues: Protein TIC 214 (1780 aa).

Helical transmembrane passes span 19–39, 68–88, 91–111, 133–153, 176–196, and 227–247; these read IINS…FSIG, FIAG…HLAL, PHTI…WNNN, VFLN…SSML, VGWL…LVWI, and IFSI…PSPI. Positions 251–275 are disordered; it reads KLKGTSETEERGGTKQDQEVSTEEA. A compositionally biased stretch (basic and acidic residues) spans 254-268; that stretch reads GTSETEERGGTKQDQ.

This sequence belongs to the TIC214 family. As to quaternary structure, part of the Tic complex.

The protein localises to the plastid. Its subcellular location is the chloroplast inner membrane. In terms of biological role, involved in protein precursor import into chloroplasts. May be part of an intermediate translocation complex acting as a protein-conducting channel at the inner envelope. The chain is Protein TIC 214 from Draba nemorosa (Woodland whitlowgrass).